Consider the following 450-residue polypeptide: Na(+)/H(+) antiporter NhaA 2 (450 aa).

A run of 12 helical transmembrane segments spans residues valine 43–tryptophan 63, leucine 86–leucine 106, alanine 124–valine 144, glycine 155–serine 175, phenylalanine 185–tyrosine 205, glutamate 208–valine 228, serine 234–valine 254, valine 258–proline 278, valine 299–leucine 319, proline 326–threonine 346, tryptophan 364–isoleucine 384, and phenylalanine 398–leucine 418.

This sequence belongs to the NhaA Na(+)/H(+) (TC 2.A.33) antiporter family.

It localises to the cell membrane. It catalyses the reaction Na(+)(in) + 2 H(+)(out) = Na(+)(out) + 2 H(+)(in). In terms of biological role, na(+)/H(+) antiporter that extrudes sodium in exchange for external protons. The protein is Na(+)/H(+) antiporter NhaA 2 of Mycobacterium sp. (strain JLS).